The primary structure comprises 410 residues: Cytochrome P450 monooxygenase mpsF (410 aa).

Position 355 (Cys355) interacts with heme.

It belongs to the cytochrome P450 family. Heme serves as cofactor.

It functions in the pathway secondary metabolite biosynthesis. Its function is as follows. Cytochrome P450 monooxygenase; part of the gene cluster that mediates the biosynthesis of macrophasetins, 3-decalinoyltetramic acids (DTAs) which feature a tetramate (pyrrolidine-2,4-dione) unit connected to a decalin fragment and that have potent bioactivities. The PKS-NRPS mpsA together with its associated enoylreductase partner mpsG incorporate one unit of acetyl-CoA, seven units of malonyl-CoA, and one unit of L-alanine to assemble the linear tetramic acid intermediate corresponding to the backbone of macrophasetins. Without the Diels-Alderase mpsD, the mpsA/G product can undergo the non-enzymatic intramolecular Diels-Alder (IMDA) reaction to generate both macrophasetin A and macrophasetin B. Catalyzed by mpsD, the linear tetramic acid intermediate is thoroughly converted to macrophasetin A via the endo-IMDA reaction in a regioselective and stereoselective manner. Finally, the cytochrome P450 monooxygenase mpsF catalyzes the hydroxylation at C20 to yield the end product macrophasetin C. The chain is Cytochrome P450 monooxygenase mpsF from Macrophomina phaseolina (strain MS6) (Charcoal rot fungus).